We begin with the raw amino-acid sequence, 141 residues long: 3-hydroxyacyl-[acyl-carrier-protein] dehydratase FabZ (141 aa).

His48 is a catalytic residue.

Belongs to the thioester dehydratase family. FabZ subfamily.

The protein resides in the cytoplasm. The catalysed reaction is a (3R)-hydroxyacyl-[ACP] = a (2E)-enoyl-[ACP] + H2O. Involved in unsaturated fatty acids biosynthesis. Catalyzes the dehydration of short chain beta-hydroxyacyl-ACPs and long chain saturated and unsaturated beta-hydroxyacyl-ACPs. This Streptococcus thermophilus (strain CNRZ 1066) protein is 3-hydroxyacyl-[acyl-carrier-protein] dehydratase FabZ.